The following is a 218-amino-acid chain: Nonsense-mediated decay protein 4 (218 aa).

It localises to the cytoplasm. In terms of biological role, involved in nonsense-mediated decay of mRNAs containing premature stop codons. The polypeptide is Nonsense-mediated decay protein 4 (NMD4) (Saccharomyces cerevisiae (strain ATCC 204508 / S288c) (Baker's yeast)).